Consider the following 199-residue polypeptide: Chaperone protein TorD (199 aa).

Belongs to the TorD/DmsD family. TorD subfamily.

The protein resides in the cytoplasm. In terms of biological role, involved in the biogenesis of TorA. Acts on TorA before the insertion of the molybdenum cofactor and, as a result, probably favors a conformation of the apoenzyme that is competent for acquiring the cofactor. The chain is Chaperone protein TorD from Actinobacillus pleuropneumoniae serotype 3 (strain JL03).